Consider the following 214-residue polypeptide: N-(5'-phosphoribosyl)anthranilate isomerase (214 aa).

This sequence belongs to the TrpF family.

The enzyme catalyses N-(5-phospho-beta-D-ribosyl)anthranilate = 1-(2-carboxyphenylamino)-1-deoxy-D-ribulose 5-phosphate. It functions in the pathway amino-acid biosynthesis; L-tryptophan biosynthesis; L-tryptophan from chorismate: step 3/5. This Rhodospirillum centenum (strain ATCC 51521 / SW) protein is N-(5'-phosphoribosyl)anthranilate isomerase.